Here is a 215-residue protein sequence, read N- to C-terminus: Small ribosomal subunit protein bS6 (215 aa).

Disordered regions lie at residues R121 to K153 and N187 to Q215. Positions S144–K153 are enriched in basic and acidic residues. A compositionally biased stretch (low complexity) spans Q188–N198. Residues R199–Q215 show a composition bias toward basic and acidic residues.

Belongs to the bacterial ribosomal protein bS6 family.

Its function is as follows. Binds together with bS18 to 16S ribosomal RNA. This is Small ribosomal subunit protein bS6 (rpsF) from Mycoplasma pneumoniae (strain ATCC 29342 / M129 / Subtype 1) (Mycoplasmoides pneumoniae).